Reading from the N-terminus, the 642-residue chain is Tigger transposable element derived 5 (642 aa).

Residues 1–54 (MYPASPSAGPALHPVPHRARLPRPRCLAEPPRSPAPGPGSTARPPPPAPGPRPR) form a disordered region. Residues 31–52 (PRSPAPGPGSTARPPPPAPGPR) show a composition bias toward pro residues. The region spanning 56-107 (AVKMTFRKAYSIKDKLQAIERVKGGERQASVCRDFGVPGGTLRGWLKDEPKL) is the HTH psq-type domain. DNA-binding regions (H-T-H motif) lie at residues 83-103 (QASV…WLKD) and 154-187 (PVIQ…WQKR). Residues 121–194 (QRKKMRLANE…QKRHGISSQR (74 aa)) form the HTH CENPB-type domain. Low complexity predominate over residues 198–208 (EAEPPVAGPAP). Residues 198–230 (EAEPPVAGPAPVKEEPAQPSSAGLLLDGTPATL) are disordered. The DDE-1 domain maps to 239–364 (DEQIYNANVT…CLQQKAVLLV (126 aa)). The tract at residues 543 to 583 (GLPEGCGEEVAPAAPPSPASLPSSIGAGEEEEEEATEQGGV) is disordered.

Belongs to the tigger transposable element derived protein family.

Its subcellular location is the nucleus. The sequence is that of Tigger transposable element derived 5 (Tigd5) from Rattus norvegicus (Rat).